The primary structure comprises 40 residues: QVLKYCPKIGYCSSKCSKAEVWAYSPDCKVHCCVPANQKW.

Glutamine 1 bears the Pyrrolidone carboxylic acid mark. 3 disulfide bridges follow: cysteine 6/cysteine 33, cysteine 12/cysteine 28, and cysteine 16/cysteine 32.

It belongs to the transferrin family.

The sequence is that of Meleagrin from Meleagris gallopavo (Wild turkey).